Reading from the N-terminus, the 150-residue chain is Large ribosomal subunit protein bL9 (150 aa).

Belongs to the bacterial ribosomal protein bL9 family.

Functionally, binds to the 23S rRNA. The polypeptide is Large ribosomal subunit protein bL9 (Pectobacterium atrosepticum (strain SCRI 1043 / ATCC BAA-672) (Erwinia carotovora subsp. atroseptica)).